The chain runs to 235 residues: Putative HAD-hydrolase YfnB (235 aa).

The active-site Nucleophile is the Asp10.

This sequence belongs to the HAD-like hydrolase superfamily. YjjG family.

This is Putative HAD-hydrolase YfnB (yfnB) from Bacillus subtilis (strain 168).